We begin with the raw amino-acid sequence, 145 residues long: UPF0735 ACT domain-containing protein CPE1414 (145 aa).

Residues 69-144 (IFNMVVTHEK…GVEKVEFVAM (76 aa)) form the ACT domain.

The protein belongs to the UPF0735 family.

In Clostridium perfringens (strain 13 / Type A), this protein is UPF0735 ACT domain-containing protein CPE1414.